An 81-amino-acid polypeptide reads, in one-letter code: Cell division protein ZapB (81 aa).

Residues 5-81 adopt a coiled-coil conformation; the sequence is LEVFEKLESK…QALLGRMEEV (77 aa). The disordered stretch occupies residues 43-64; sequence VQSAQHGREELERENSQLKEQQ. Positions 48–59 are enriched in basic and acidic residues; it reads HGREELERENSQ.

Belongs to the ZapB family. As to quaternary structure, homodimer. The ends of the coiled-coil dimer bind to each other, forming polymers. Interacts with FtsZ.

It localises to the cytoplasm. Functionally, non-essential, abundant cell division factor that is required for proper Z-ring formation. It is recruited early to the divisome by direct interaction with FtsZ, stimulating Z-ring assembly and thereby promoting cell division earlier in the cell cycle. Its recruitment to the Z-ring requires functional FtsA or ZipA. This chain is Cell division protein ZapB, found in Klebsiella pneumoniae subsp. pneumoniae (strain ATCC 700721 / MGH 78578).